Here is a 285-residue protein sequence, read N- to C-terminus: Pantothenate synthetase (285 aa).

30 to 37 (MGNLHAGH) contacts ATP. The active-site Proton donor is the H37. Residue Q61 coordinates (R)-pantoate. Q61 is a beta-alanine binding site. Residue 149-152 (GEKD) coordinates ATP. Q155 provides a ligand contact to (R)-pantoate. Position 186-189 (186-189 (LSSR)) interacts with ATP.

It belongs to the pantothenate synthetase family. Homodimer.

It localises to the cytoplasm. The catalysed reaction is (R)-pantoate + beta-alanine + ATP = (R)-pantothenate + AMP + diphosphate + H(+). It functions in the pathway cofactor biosynthesis; (R)-pantothenate biosynthesis; (R)-pantothenate from (R)-pantoate and beta-alanine: step 1/1. In terms of biological role, catalyzes the condensation of pantoate with beta-alanine in an ATP-dependent reaction via a pantoyl-adenylate intermediate. The chain is Pantothenate synthetase from Ectopseudomonas mendocina (strain ymp) (Pseudomonas mendocina).